Here is a 547-residue protein sequence, read N- to C-terminus: Hydroxylamine reductase (547 aa).

[4Fe-4S] cluster is bound by residues Cys-5, Cys-8, Cys-17, and Cys-23. Hybrid [4Fe-2O-2S] cluster-binding residues include His-242, Glu-266, Cys-310, Cys-401, Cys-429, Cys-454, Glu-489, and Lys-491. The residue at position 401 (Cys-401) is a Cysteine persulfide.

It belongs to the HCP family. Requires [4Fe-4S] cluster as cofactor. Hybrid [4Fe-2O-2S] cluster serves as cofactor.

It is found in the cytoplasm. It catalyses the reaction A + NH4(+) + H2O = hydroxylamine + AH2 + H(+). Its function is as follows. Catalyzes the reduction of hydroxylamine to form NH(3) and H(2)O. The protein is Hydroxylamine reductase of Thermoanaerobacter pseudethanolicus (strain ATCC 33223 / 39E) (Clostridium thermohydrosulfuricum).